The primary structure comprises 525 residues: Ribosomal protein S6 kinase beta-1 (525 aa).

The short motif at 28-32 (FDIDL) is the TOS motif element. A disordered region spans residues 28-54 (FDIDLDQPEDAGSEDELEEGGQLNESM). Residues 30–46 (IDLDQPEDAGSEDELEE) show a composition bias toward acidic residues. Residues 91 to 352 (FELLRVLGKG…AGEVQAHPFF (262 aa)) enclose the Protein kinase domain. ATP is bound by residues 97-105 (LGKGGYGKV) and lysine 123. Aspartate 218 acts as the Proton acceptor in catalysis. Threonine 252 bears the Phosphothreonine; by PDPK1 mark. One can recognise an AGC-kinase C-terminal domain in the interval 353–423 (RHINWEELLA…VAPSVLESVK (71 aa)). The disordered stretch occupies residues 380 to 399 (SQFDSKFTRQTPVDSPDDST). A compositionally biased stretch (polar residues) spans 381-399 (QFDSKFTRQTPVDSPDDST). Serine 394 carries the post-translational modification Phosphoserine. Threonine 412 is modified (phosphothreonine; by MTOR, NEK6 and NEK7). The segment at 424-525 (EKFSFEPKIR…KRPEHLRMNL (102 aa)) is autoinhibitory domain. 2 positions are modified to phosphoserine: serine 434 and serine 441. Threonine 444 is modified (phosphothreonine). Phosphoserine is present on residues serine 447 and serine 452. Residues 486-509 (VTTSGEASAPLPIRQPNSGPYKKQ) form a disordered region. Lysine 516 is modified (N6-acetyllysine).

Belongs to the protein kinase superfamily. AGC Ser/Thr protein kinase family. S6 kinase subfamily. In terms of assembly, interacts with PPP1R9A/neurabin-1. Interacts with RPTOR. Interacts with IRS1. Interacts with EIF3B and EIF3C. Interacts with POLDIP3. Interacts with TRAF4. Interacts (via N-terminus) with IER5. In terms of processing, dephosphorylation by PPP1CC at Thr-412 in mitochondrion. Phosphorylation at Thr-412 is regulated by mTORC1. The phosphorylation at this site is maintained by an agonist-dependent autophosphorylation mechanism. Activated by phosphorylation at Thr-252 by PDPK1. As to expression, brain.

The protein resides in the cytoplasm. Its subcellular location is the synapse. It localises to the synaptosome. The protein localises to the mitochondrion outer membrane. It is found in the mitochondrion. It catalyses the reaction L-seryl-[protein] + ATP = O-phospho-L-seryl-[protein] + ADP + H(+). The enzyme catalyses L-threonyl-[protein] + ATP = O-phospho-L-threonyl-[protein] + ADP + H(+). Activation requires multiple phosphorylation events on serine/threonine residues. Activation appears to be first mediated by phosphorylation of multiple sites in the autoinhibitory domain, which facilitates phosphorylation at Thr-412, disrupting the autoinhibitory mechanism and allowing phosphorylation of Thr-252 by PDPK1. The active conformation of the kinase is believed to be stabilized by a mechanism involving three conserved phosphorylation sites located in the kinase domain activation loop (Thr-252) and in the AGC-kinase C-terminal domain (Ser-394 in the middle of the tail/linker region and Thr-412 within a hydrophobic motif at its end). Activated by mTORC1; isoform Alpha I and isoform Alpha II are sensitive to rapamycin, which inhibits activating phosphorylation at Thr-412. Activated by PDPK1. Its function is as follows. Serine/threonine-protein kinase that acts downstream of mTOR signaling in response to growth factors and nutrients to promote cell proliferation, cell growth and cell cycle progression. Regulates protein synthesis through phosphorylation of EIF4B, RPS6 and EEF2K, and contributes to cell survival by repressing the pro-apoptotic function of BAD. Under conditions of nutrient depletion, the inactive form associates with the EIF3 translation initiation complex. Upon mitogenic stimulation, phosphorylation by the mechanistic target of rapamycin complex 1 (mTORC1) leads to dissociation from the EIF3 complex and activation. The active form then phosphorylates and activates several substrates in the pre-initiation complex, including the EIF2B complex and the cap-binding complex component EIF4B. Also controls translation initiation by phosphorylating a negative regulator of EIF4A, PDCD4, targeting it for ubiquitination and subsequent proteolysis. Promotes initiation of the pioneer round of protein synthesis by phosphorylating POLDIP3/SKAR. In response to IGF1, activates translation elongation by phosphorylating EEF2 kinase (EEF2K), which leads to its inhibition and thus activation of EEF2. Also plays a role in feedback regulation of mTORC2 by mTORC1 by phosphorylating MAPKAP1/SIN1, MTOR and RICTOR, resulting in the inhibition of mTORC2 and AKT1 signaling. Also involved in feedback regulation of mTORC1 and mTORC2 by phosphorylating DEPTOR. Mediates cell survival by phosphorylating the pro-apoptotic protein BAD and suppressing its pro-apoptotic function. Phosphorylates mitochondrial URI1 leading to dissociation of a URI1-PPP1CC complex. The free mitochondrial PPP1CC can then dephosphorylate RPS6KB1 at Thr-412, which is proposed to be a negative feedback mechanism for the RPS6KB1 anti-apoptotic function. Mediates TNF-alpha-induced insulin resistance by phosphorylating IRS1 at multiple serine residues, resulting in accelerated degradation of IRS1. In cells lacking functional TSC1-2 complex, constitutively phosphorylates and inhibits GSK3B. May be involved in cytoskeletal rearrangement through binding to neurabin. Phosphorylates and activates the pyrimidine biosynthesis enzyme CAD, downstream of MTOR. Following activation by mTORC1, phosphorylates EPRS and thereby plays a key role in fatty acid uptake by adipocytes and also most probably in interferon-gamma-induced translation inhibition. The sequence is that of Ribosomal protein S6 kinase beta-1 (Rps6kb1) from Rattus norvegicus (Rat).